A 90-amino-acid chain; its full sequence is MYSLELSLRYSPFPLSIQKKEFDDVKRIYDEIKTAMNETLESSNLIELSCDKVQDKLITVRAKEIISVQIYEKSSVAGGAKRPGFSLDID.

It belongs to the UPF0367 family.

This Prochlorococcus marinus (strain MIT 9301) protein is UPF0367 protein P9301_01411.